The following is a 319-amino-acid chain: MDLSAIYESLQSMSHDLSSDHGGTESLGGLWNINSDSIPSGVTSRLTGRSTSLVEGRSCGWVPPPPGFAPLAPRPGPELSPSPTSPTATPTTSSRYKTELCRTYSESGRCRYGAKCQFAHGLGELRQANRHPKYKTELCHKFYLQGRCPYGSRCHFIHNPTEDLALPGQPHVLRQSISFSGLPSGRRSSPPPPGFSGPSLSSCSFSPSSSPPPPGDLPLSPSAFSAAPGTPVTRRDPNQACCPSCRRSTTPSTIWGPLGGLARSPSAHSLGSDPDDYASSGSSLGGSDSPVFEAGVFGPPQTPAPPRRLPIFNRISVSE.

Residues 1–15 are necessary for nuclear export; that stretch reads MDLSAIYESLQSMSH. A necessary and sufficient for the association with mRNA decay enzymes and mRNA decay activation region spans residues 1–92; the sequence is MDLSAIYESL…PTSPTATPTT (92 aa). 2 necessary for localization of ARE-containing mRNAs to processing bodies (PBs) regions span residues 1-166 and 92-319; these read MDLS…DLAL and TSSR…SVSE. Phosphoserine; by MAPKAPK2 is present on Ser-52. The residue at position 58 (Ser-58) is a Phosphoserine. Residues 63–67 form a P-P-P-P-G repeat; that stretch reads PPPPG. Positions 65 to 84 are enriched in pro residues; the sequence is PPGFAPLAPRPGPELSPSPT. Residues 65 to 95 are disordered; the sequence is PPGFAPLAPRPGPELSPSPTSPTATPTTSSR. Phosphoserine occurs at positions 80 and 82. Position 84 is a phosphothreonine (Thr-84). At Ser-85 the chain carries Phosphoserine. Residues 85-94 are compositionally biased toward low complexity; sequence SPTATPTTSS. The necessary for nuclear localization stretch occupies residues 87-160; sequence TATPTTSSRY…GSRCHFIHNP (74 aa). Residues 89-165 are necessary for RNA-binding; sequence TPTTSSRYKT…FIHNPTEDLA (77 aa). 2 C3H1-type zinc fingers span residues 95 to 123 and 133 to 161; these read RYKT…HGLG and KYKT…HNPT. The tract at residues 95–186 is necessary for interaction with PABPN1; the sequence is RYKTELCRTY…ISFSGLPSGR (92 aa). The necessary for mRNA decay activation stretch occupies residues 166–319; that stretch reads LPGQPHVLRQ…PIFNRISVSE (154 aa). Ser-178 is modified (phosphoserine; by MAPKAPK2). A compositionally biased stretch (low complexity) spans 179-188; sequence FSGLPSGRRS. The tract at residues 179–309 is disordered; that stretch reads FSGLPSGRRS…PQTPAPPRRL (131 aa). A Phosphoserine modification is found at Ser-189. A P-P-P-P-G repeat occupies 190 to 194; that stretch reads PPPPG. The segment covering 196-208 has biased composition (low complexity); sequence SGPSLSSCSFSPS. Ser-210 is modified (phosphoserine). Residues 211–215 form a P-P-P-P-G repeat; the sequence is PPPPG. Position 220 is a phosphoserine; by MAPK1; in vitro (Ser-220). Phosphothreonine is present on Thr-250. Ser-269, Ser-289, and Ser-316 each carry phosphoserine. Low complexity predominate over residues 279-289; the sequence is SSGSSLGGSDS. The tract at residues 305-319 is interaction with CNOT1; sequence PPRRLPIFNRISVSE.

Associates with cytoplasmic CCR4-NOT and PAN2-PAN3 deadenylase complexes to trigger ARE-containing mRNA deadenylation and decay processes. Part of a mRNA decay activation complex at least composed of poly(A)-specific exoribonucleases CNOT6, EXOSC2 and XRN1 and mRNA-decapping enzymes DCP1A and DCP2. Associates with the RNA exosome complex. Interacts (via phosphorylated form) with 14-3-3 proteins; these interactions promote exclusion of ZFP36 from cytoplasmic stress granules in response to arsenite treatment in a MAPKAPK2-dependent manner and does not prevent CCR4-NOT deadenylase complex recruitment or ZFP36-induced ARE-containing mRNA deadenylation and decay processes. Interacts with 14-3-3 proteins; these interactions occur in response to rapamycin in an Akt-dependent manner. Interacts with AGO2 and AGO4. Interacts (via C-terminus) with CNOT1; this interaction occurs in a RNA-independent manner and induces mRNA deadenylation. Interacts (via N-terminus) with CNOT6. Interacts with CNOT6L. Interacts (via C-terminus) with CNOT7; this interaction occurs in a RNA-independent manner, induces mRNA deadenylation and is inhibited in a phosphorylation MAPKAPK2-dependent manner. Interacts (via unphosphorylated form) with CNOT8; this interaction occurs in a RNA-independent manner and is inhibited in a phosphorylation MAPKAPK2-dependent manner. Interacts with DCP1A. Interacts (via N-terminus) with DCP2. Interacts with EDC3. Interacts (via N-terminus) with EXOSC2. Interacts with heat shock 70 kDa proteins. Interacts with KHSRP; this interaction increases upon cytokine-induced treatment. Interacts with MAP3K4; this interaction enhances the association with SH3KBP1/CIN85. Interacts with MAPKAPK2; this interaction occurs upon skeletal muscle satellite cell activation. Interacts with NCL. Interacts with NUP214; this interaction increases upon lipopolysaccharide (LPS) stimulation. Interacts with PABPC1; this interaction occurs in a RNA-dependent manner. Interacts (via hypophosphorylated form) with PABPN1 (via RRM domain and C-terminal arginine-rich region); this interaction occurs in the nucleus in a RNA-independent manner, decreases in presence of single-stranded poly(A) RNA-oligomer and in a p38 MAPK-dependent-manner and inhibits nuclear poly(A) tail synthesis. Interacts with PAN2. Interacts (via C3H1-type zinc finger domains) with PKM. Interacts (via C3H1-type zinc finger domains) with nuclear RNA poly(A) polymerase. Interacts with PPP2CA; this interaction occurs in LPS-stimulated cells and induces ZFP36 dephosphorylation, and hence may promote ARE-containing mRNAs decay. Interacts (via C-terminus) with PRR5L (via C-terminus); this interaction may accelerate ZFP36-mediated mRNA decay during stress. Interacts (via C-terminus) with SFN; this interaction occurs in a phosphorylation-dependent manner. Interacts (via extreme C-terminal region) with SH3KBP1/CIN85 (via SH3 domains); this interaction enhances MAP3K4-induced phosphorylation of ZFP36 at Ser-58 and Ser-85 and does not alter neither ZFP36 binding to ARE-containing transcripts nor TNF-alpha mRNA decay. Interacts with XRN1. Interacts (via C-terminus and Ser-178 phosphorylated form) with YWHAB; this interaction occurs in a p38/MAPKAPK2-dependent manner, increases cytoplasmic localization of ZFP36 and protects ZFP36 from Ser-178 dephosphorylation by serine/threonine phosphatase 2A, and hence may be crucial for stabilizing ARE-containing mRNAs. Interacts (via phosphorylated form) with YWHAE. Interacts (via C-terminus) with YWHAG; this interaction occurs in a phosphorylation-dependent manner. Interacts with YWHAH; this interaction occurs in a phosphorylation-dependent manner. Interacts with YWHAQ; this interaction occurs in a phosphorylation-dependent manner. Interacts with (via C-terminus) YWHAZ; this interaction occurs in a phosphorylation-dependent manner. Does not interact with SH3KBP1. Interacts (via the 4EHP-binding motif) with EIF4E2; the interaction is direct. Interacts (via P-P-P-P-G repeats) with GIGYF2; the interaction is direct. Post-translationally, phosphorylated. Phosphorylation at serine and/or threonine residues occurs in a p38 MAPK- and MAPKAPK2-dependent manner. Phosphorylated by MAPKAPK2 at Ser-52 and Ser-178; phosphorylation increases its stability and cytoplasmic localization, promotes binding to 14-3-3 adapter proteins and inhibits the recruitment of cytoplasmic CCR4-NOT and PAN2-PAN3 deadenylase complexes to the mRNA decay machinery, thereby inhibiting ZFP36-induced ARE-containing mRNA deadenylation and decay processes. Phosphorylation by MAPKAPK2 does not impair ARE-containing RNA-binding. Phosphorylated in a MAPKAPK2- and p38 MAPK-dependent manner upon skeletal muscle satellite cell activation; this phosphorylation inhibits ZFP36-mediated mRNA decay activity, and hence stabilizes MYOD1 mRNA. Phosphorylated by MAPK1 upon mitogen stimulation. Phosphorylated at Ser-58 and Ser-85; these phosphorylations increase in a SH3KBP1-dependent manner. Phosphorylated at serine and threonine residues in a pyruvate kinase PKM- and p38 MAPK-dependent manner. Phosphorylation at Ser-52 may participate in the PKM-mediated degradation of ZFP36 in a p38 MAPK-dependent manner. Dephosphorylated by serine/threonine phosphatase 2A at Ser-178. Ubiquitinated; pyruvate kinase (PKM)-dependent ubiquitination leads to proteasomal degradation through a p38 MAPK signaling pathway. In terms of tissue distribution, expressed in skeletal muscle satellite cells. Strongly expressed in differentiated adipocytes compared to preadipocytes (at protein level). Expressed in embryonic stem cells (ESCs). Expressed in heart, placenta, kidney, intestine, liver, lung, thymus, fat and spleen.

The protein resides in the nucleus. Its subcellular location is the cytoplasm. It is found in the cytoplasmic granule. It localises to the P-body. Its function is as follows. Zinc-finger RNA-binding protein that destabilizes numerous cytoplasmic AU-rich element (ARE)-containing mRNA transcripts by promoting their poly(A) tail removal or deadenylation, and hence provide a mechanism for attenuating protein synthesis. Acts as an 3'-untranslated region (UTR) ARE mRNA-binding adapter protein to communicate signaling events to the mRNA decay machinery. Recruits deadenylase CNOT7 (and probably the CCR4-NOT complex) via association with CNOT1, and hence promotes ARE-mediated mRNA deadenylation. Also functions by recruiting components of the cytoplasmic RNA decay machinery to the bound ARE-containing mRNAs. Self-regulates by destabilizing its own mRNA. Binds to 3'-UTR ARE of numerous mRNAs and of its own mRNA. Plays a role in anti-inflammatory responses; suppresses tumor necrosis factor (TNF)-alpha production by stimulating ARE-mediated TNF-alpha mRNA decay and several other inflammatory ARE-containing mRNAs in interferon (IFN)- and/or lipopolysaccharide (LPS)-induced macrophages. Also plays a role in the regulation of dendritic cell maturation at the post-transcriptional level, and hence operates as part of a negative feedback loop to limit the inflammatory response. Promotes ARE-mediated mRNA decay of hypoxia-inducible factor HIF1A mRNA during the response of endothelial cells to hypoxia. Positively regulates early adipogenesis of preadipocytes by promoting ARE-mediated mRNA decay of immediate early genes (IEGs). Negatively regulates hematopoietic/erythroid cell differentiation by promoting ARE-mediated mRNA decay of the transcription factor STAT5B mRNA. Plays a role in maintaining skeletal muscle satellite cell quiescence by promoting ARE-mediated mRNA decay of the myogenic determination factor MYOD1 mRNA. Also associates with and regulates the expression of non-ARE-containing target mRNAs at the post-transcriptional level, such as MHC class I mRNAs. Participates in association with argonaute RISC catalytic components in the ARE-mediated mRNA decay mechanism; assists microRNA (miRNA) targeting ARE-containing mRNAs. May also play a role in the regulation of cytoplasmic mRNA decapping; enhances decapping of ARE-containing RNAs, in vitro. Involved in the delivery of target ARE-mRNAs to processing bodies (PBs). In addition to its cytosolic mRNA-decay function, affects nuclear pre-mRNA processing. Negatively regulates nuclear poly(A)-binding protein PABPN1-stimulated polyadenylation activity on ARE-containing pre-mRNA during LPS-stimulated macrophages. Also involved in the regulation of stress granule (SG) and P-body (PB) formation and fusion. Plays a role in the regulation of keratinocyte proliferation, differentiation and apoptosis. Plays a role as a tumor suppressor by inhibiting cell proliferation in breast cancer cells. In Mus musculus (Mouse), this protein is mRNA decay activator protein ZFP36.